Consider the following 296-residue polypeptide: 3-methyl-2-oxobutanoate hydroxymethyltransferase (296 aa).

A disordered region spans residues 1 to 33 (MDASDTPTHPAPHPADPAATPYGAPTTPPRPLR). Residues 16 to 25 (DPAATPYGAP) are compositionally biased toward low complexity. 2 residues coordinate Mg(2+): D77 and D116. Residues 77-78 (DS), D116, and K146 contribute to the 3-methyl-2-oxobutanoate site. Residue E148 coordinates Mg(2+). Residue E214 is the Proton acceptor of the active site.

Belongs to the PanB family. In terms of assembly, homodecamer; pentamer of dimers. Mg(2+) is required as a cofactor.

It localises to the cytoplasm. It catalyses the reaction 3-methyl-2-oxobutanoate + (6R)-5,10-methylene-5,6,7,8-tetrahydrofolate + H2O = 2-dehydropantoate + (6S)-5,6,7,8-tetrahydrofolate. Its pathway is cofactor biosynthesis; (R)-pantothenate biosynthesis; (R)-pantoate from 3-methyl-2-oxobutanoate: step 1/2. Catalyzes the reversible reaction in which hydroxymethyl group from 5,10-methylenetetrahydrofolate is transferred onto alpha-ketoisovalerate to form ketopantoate. The chain is 3-methyl-2-oxobutanoate hydroxymethyltransferase from Frankia casuarinae (strain DSM 45818 / CECT 9043 / HFP020203 / CcI3).